A 336-amino-acid chain; its full sequence is tRNA N6-adenosine threonylcarbamoyltransferase (336 aa).

H111 and H115 together coordinate Fe cation. Residues 134-138 (LVSGG), D167, G180, and N271 contribute to the substrate site. Position 299 (D299) interacts with Fe cation.

It belongs to the KAE1 / TsaD family. Fe(2+) is required as a cofactor.

The protein resides in the cytoplasm. It catalyses the reaction L-threonylcarbamoyladenylate + adenosine(37) in tRNA = N(6)-L-threonylcarbamoyladenosine(37) in tRNA + AMP + H(+). Required for the formation of a threonylcarbamoyl group on adenosine at position 37 (t(6)A37) in tRNAs that read codons beginning with adenine. Is involved in the transfer of the threonylcarbamoyl moiety of threonylcarbamoyl-AMP (TC-AMP) to the N6 group of A37, together with TsaE and TsaB. TsaD likely plays a direct catalytic role in this reaction. The sequence is that of tRNA N6-adenosine threonylcarbamoyltransferase from Thioalkalivibrio sulfidiphilus (strain HL-EbGR7).